Reading from the N-terminus, the 130-residue chain is Glycine cleavage system H protein (130 aa).

In terms of domain architecture, Lipoyl-binding spans 25 to 106 (TALIGISDFA…PFDSWMIKVK (82 aa)). K66 bears the N6-lipoyllysine mark.

The protein belongs to the GcvH family. The glycine cleavage system is composed of four proteins: P, T, L and H. (R)-lipoate serves as cofactor.

In terms of biological role, the glycine cleavage system catalyzes the degradation of glycine. The H protein shuttles the methylamine group of glycine from the P protein to the T protein. The polypeptide is Glycine cleavage system H protein (Leptospira borgpetersenii serovar Hardjo-bovis (strain JB197)).